The sequence spans 865 residues: Armadillo repeat-containing protein 2 (865 aa).

Disordered regions lie at residues 39 to 75 (TVRTQRPFTPREDQRKLFGPASSRTPENRPPSSFSVH) and 214 to 243 (SVPFHLRSGGDQGKRRPRASSSSRSPDQSR). The span at 60-75 (SSRTPENRPPSSFSVH) shows a compositional bias: polar residues. ARM repeat units lie at residues 261-300 (IEVDEVFWNTRIVPILHDLEKEENIEMVCATCTQLHHALE), 303-343 (NMLG…ALKV), 362-402 (EKND…TIKF), 407-448 (PEFL…HLLV), 461-502 (PLAR…KLTS), 505-546 (DCCV…NLTA), 550-587 (QAREQFSKEKGSIPTLLSLFHTFYKLDLHSGKRWGEGD), 589-614 (RPEARRPAQAEDVLIKLTRVLANLAI), 617-660 (GVGP…NLSY), 662-703 (KVKN…NLSQ), 705-744 (HDICDFIVQKNVHKFMIALLDAKHQDICFSACGVLLNLTV), and 746-788 (RDKR…NFSE).

Functionally, required for sperm flagellum axoneme organization and function. Involved in axonemal central pair complex assembly and/or stability. The chain is Armadillo repeat-containing protein 2 from Bos taurus (Bovine).